We begin with the raw amino-acid sequence, 360 residues long: 3-dehydroquinate synthase (360 aa).

NAD(+) contacts are provided by residues 72 to 77 (DGEEYK), 106 to 110 (GVIGD), 130 to 131 (TT), Lys143, and Lys152. Zn(2+) is bound by residues Glu185, His248, and His265.

The protein belongs to the sugar phosphate cyclases superfamily. Dehydroquinate synthase family. The cofactor is Co(2+). Zn(2+) serves as cofactor. It depends on NAD(+) as a cofactor.

It is found in the cytoplasm. The catalysed reaction is 7-phospho-2-dehydro-3-deoxy-D-arabino-heptonate = 3-dehydroquinate + phosphate. The protein operates within metabolic intermediate biosynthesis; chorismate biosynthesis; chorismate from D-erythrose 4-phosphate and phosphoenolpyruvate: step 2/7. Its function is as follows. Catalyzes the conversion of 3-deoxy-D-arabino-heptulosonate 7-phosphate (DAHP) to dehydroquinate (DHQ). This is 3-dehydroquinate synthase from Geotalea uraniireducens (strain Rf4) (Geobacter uraniireducens).